An 87-amino-acid chain; its full sequence is uncharacterized protein (87 aa).

The first 22 residues, 1-22 (MKIKTTVAALSVLSVLSFGAFA), serve as a signal peptide directing secretion.

Belongs to the BhsA/McbA family.

The protein localises to the periplasm. This is an uncharacterized protein from Escherichia coli O6:H1 (strain CFT073 / ATCC 700928 / UPEC).